Consider the following 557-residue polypeptide: Nucleoporin AMO1 (557 aa).

The C3H1-type zinc finger occupies 1–25 (MTVCRFWQQGYCRNGNACKFEHPPK). A coiled-coil region spans residues 114-141 (QGALNEIQAAYQAAQQQIQNTLQNIPAA). Residues 161–297 (ESSKGSSTGG…SALGPKPGAF (137 aa)) form a disordered region. 10 SXFG repeats span residues 171 to 174 (SVFG), 200 to 203 (SAFG), 213 to 216 (SAFG), 228 to 231 (SAFG), 240 to 243 (SAFG), 249 to 252 (STFG), 262 to 265 (SAFG), 282 to 285 (SAFG), 303 to 306 (SAFG), and 314 to 317 (SPFG). The span at 195–215 (STPSTSAFGQPSPLGQKSSAF) shows a compositional bias: polar residues. Residues 243–253 (GSPQTGSTFGQ) show a composition bias toward polar residues. The disordered stretch occupies residues 315–463 (PFGAAAQATQ…DLLSYATKNP (149 aa)). Polar residues-rich tracts occupy residues 321 to 338 (QATQ…QAAN) and 351 to 366 (GQPS…GQPS). 4 SXFG repeats span residues 348-351 (SAFG), 370-373 (SAFG), 387-390 (SLFG), and 407-410 (SAFG). The segment covering 367–385 (TQSSAFGQQQPQQAGTFGS) has biased composition (low complexity). Positions 388–429 (LFGQQQQQPSNVFGQPSTTSAFGSQAATSGFSQLGNATSTIG) are enriched in polar residues. The segment covering 430–443 (ASPAGAQAPASKSP) has biased composition (low complexity).

The nuclear pore complex (NPC) constitutes the exclusive means of nucleocytoplasmic transport. NPCs allow the passive diffusion of ions and small molecules and the active, nuclear transport receptor-mediated bidirectional transport of macromolecules such as proteins, RNAs, ribonucleoparticles (RNPs), and ribosomal subunits across the nuclear envelope. The 55-60 MDa NPC is composed of at least 28 different subunits: AMO1, ELYS, GLE1, GLE2, MLP1, NDC1, NIC96, NSP1, NUP133, NUP145, NUP152, NUP159, NUP170, NUP188, NUP192, NUP37, NUP49, NUP53, NUP56, NUP57, NUP82, NUP84, NUP85, POM152, POM33, POM34, SEC13 and SEH1. Due to its 8-fold rotational symmetry, all subunits are present with 8 copies or multiples thereof.

Its subcellular location is the nucleus. The protein resides in the nuclear pore complex. It is found in the nucleus membrane. In terms of biological role, functions as a component of the nuclear pore complex (NPC). NPC components, collectively referred to as nucleoporins (NUPs), can play the role of both NPC structural components and of docking or interaction partners for transiently associated nuclear transport factors. Active directional transport is assured by both, a Phe-Gly (FG) repeat affinity gradient for these transport factors across the NPC and a transport cofactor concentration gradient across the nuclear envelope (GSP1 and GSP2 GTPases associated predominantly with GTP in the nucleus, with GDP in the cytoplasm). AMO1 is specifically important for nuclear protein and mRNA export. The protein is Nucleoporin AMO1 (AMO1) of Chaetomium thermophilum (strain DSM 1495 / CBS 144.50 / IMI 039719) (Thermochaetoides thermophila).